The sequence spans 507 residues: MKELQGYLEIYRSRQQDFLYPLLFQEYIYVLAHDHGLNRLILYESMENLGYDNKSSSLVVKRLIARMYQQNHLIISANNSNQNKFVGHNKDFYSQMILEGFAVIVEIPFSLRFVSSLEGKEILESHNLRSIHSIFPFLEDTLSHLNYVSDILIPHPIHLEILVQSLRCWVQDAPSLHLLRFFLHEYHNWNNFISPKKSIFIFSKKNKRFFLFLYNSYVYECESIFVFLCKQSSHLRSTSSGALLERTHFYVKIEDLVIVFRNDFQTILWLFKDPLMHYVRYQGKSILASKGTPLLMNKWKYYLVNFWQCNFYLWSQSGRIHIKQLSNHSLDFLGYLSSVRLNPSVVKSQMLENSFIIDSAINKFDTIVPIISLIGSLAKAKFCNVSGHPISKPVRADSSDSDIIDRFGQICRNLSHYHSGSSKKTSLYRIKYILRLSCARTLARKHKSTVRAFLKRLGLELLEEFLTEEEHVLSLIFPRASFILRRLYRGRIWYLDIIRINDLANHQ.

The protein belongs to the intron maturase 2 family. MatK subfamily.

It is found in the plastid. Its subcellular location is the chloroplast. Usually encoded in the trnK tRNA gene intron. Probably assists in splicing its own and other chloroplast group II introns. The sequence is that of Maturase K from Buxus microphylla (Littleleaf boxwood).